Reading from the N-terminus, the 343-residue chain is Twinfilin (343 aa).

ADF-H domains lie at 4 to 139 and 177 to 312; these read QTGI…KHKI and GINC…EELH. Positions 317-343 are disordered; that stretch reads NLRPQFSKPKGPPSRGAKRLTKPQAVE.

Belongs to the actin-binding proteins ADF family. Twinfilin subfamily. Interacts with G-actin; ADP-actin form.

It localises to the cytoplasm. The protein localises to the cytoskeleton. The protein resides in the cell cortex. Actin-binding protein involved in motile and morphological processes. Inhibits actin polymerization, likely by sequestering G-actin. This chain is Twinfilin (twf), found in Aedes aegypti (Yellowfever mosquito).